A 763-amino-acid polypeptide reads, in one-letter code: Phosphoglycerol transferase I (763 aa).

4 consecutive transmembrane segments (helical) span residues 4-19 (LLSF…IYAW), 26-48 (WWFA…LFAS), 76-98 (YILP…GWIL), and 105-127 (PHHF…ASPA).

The protein belongs to the OpgB family.

It is found in the cell inner membrane. It catalyses the reaction a phosphatidylglycerol + a membrane-derived-oligosaccharide D-glucose = a 1,2-diacyl-sn-glycerol + a membrane-derived-oligosaccharide 6-(glycerophospho)-D-glucose.. It participates in glycan metabolism; osmoregulated periplasmic glucan (OPG) biosynthesis. In terms of biological role, transfers a phosphoglycerol residue from phosphatidylglycerol to the membrane-bound nascent glucan backbones. The chain is Phosphoglycerol transferase I from Shigella flexneri.